Here is a 145-residue protein sequence, read N- to C-terminus: Putative sterol 14-demethylase-like protein (145 aa).

Residues 5-25 (YYTLLKTSVAIIIVFVVAKLI) form a helical membrane-spanning segment.

It belongs to the cytochrome P450 family. As to expression, expressed specifically in roots.

The protein resides in the membrane. This Arabidopsis thaliana (Mouse-ear cress) protein is Putative sterol 14-demethylase-like protein (CYP51G2).